Reading from the N-terminus, the 443-residue chain is Glutamate-rich protein 1 (443 aa).

Residue Lys-12 is modified to N6-acetyllysine. Residues 15–333 (QRLFPPVPSG…DASEEDDTIT (319 aa)) are disordered. Residues 42–54 (VTSEKVSQKHAEP) show a composition bias toward basic and acidic residues. The span at 87 to 97 (SCGSPENASSG) shows a compositional bias: polar residues. 2 stretches are compositionally biased toward basic residues: residues 109-124 (PKRR…KKFK) and 159-176 (KNKK…RKKA). Positions 205-226 (ACEEDGVDTSEEDPTLAGEEDV) are enriched in acidic residues. Residues Ser-238 and Ser-254 each carry the phosphoserine modification. Residues 250-266 (GADASEEDPTPAGEEDV) are compositionally biased toward acidic residues. The residue at position 277 (Thr-277) is a Phosphothreonine. Basic and acidic residues predominate over residues 281–296 (DLTRAGEEDGKDTREE). Positions 297-332 (DGADASEEDPTWAGEEEGADSGEEDGADASEEDDTI) are enriched in acidic residues.

The chain is Glutamate-rich protein 1 (ERICH1) from Homo sapiens (Human).